Consider the following 251-residue polypeptide: Triosephosphate isomerase (251 aa).

Residue 9-11 (NWK) coordinates substrate. Catalysis depends on His94, which acts as the Electrophile. The active-site Proton acceptor is the Glu166. Substrate-binding positions include Gly172, Ser211, and 232-233 (GG).

It belongs to the triosephosphate isomerase family. Homodimer.

It is found in the cytoplasm. It catalyses the reaction D-glyceraldehyde 3-phosphate = dihydroxyacetone phosphate. It participates in carbohydrate biosynthesis; gluconeogenesis. The protein operates within carbohydrate degradation; glycolysis; D-glyceraldehyde 3-phosphate from glycerone phosphate: step 1/1. Involved in the gluconeogenesis. Catalyzes stereospecifically the conversion of dihydroxyacetone phosphate (DHAP) to D-glyceraldehyde-3-phosphate (G3P). This chain is Triosephosphate isomerase, found in Stenotrophomonas maltophilia (strain R551-3).